The sequence spans 256 residues: Cell division protein ZipA (256 aa).

Residues 1–6 (MQYGRQ) lie on the Periplasmic side of the membrane. Residues 7-27 (ILICIGILTVIILLLYGLLNS) traverse the membrane as a helical segment. The Cytoplasmic segment spans residues 28 to 256 (YWDRTVTFCK…RHVLSANKST (229 aa)).

The protein belongs to the ZipA family. Interacts with FtsZ via their C-terminal domains.

It localises to the cell inner membrane. In terms of biological role, essential cell division protein that stabilizes the FtsZ protofilaments by cross-linking them and that serves as a cytoplasmic membrane anchor for the Z ring. Also required for the recruitment to the septal ring of downstream cell division proteins. The chain is Cell division protein ZipA from Baumannia cicadellinicola subsp. Homalodisca coagulata.